Consider the following 578-residue polypeptide: Vacuolar protein 8 (578 aa).

ARM repeat units lie at residues 58 to 95 (NRAETDFFRGEPLSALSTLVYSDNVDLQRSASLTFAEI), 96 to 135 (TERDVREVDRDTLEPILFLLQSSDIEVQRAASAALGNLAV), 137 to 176 (ADNKVLIVALGGLAPLIRQMMSPNVEVQCNAVGCITNLAT), 178 to 217 (EDNKAKIARSGALGPLIRLAKSKDMRVQRNATGALLNMTH), 219 to 258 (DDNRQQLVNAGAIPVLVQLLSSSDVDVQYYCTTALSNIAV), 262 to 301 (NRKRLAQTESRLVQSLVHLMDSSTPKVQCQAALALRNLAS), 303 to 342 (EKYQLEIVRAKGLPPLLRLLQSSYLPLILSAVACIRNISI), 344 to 384 (PLNE…NLAA), and 428 to 467 (DELKPHLLNLGVFDVLIPLTESESIEVQGNSAAALGNLSS).

It belongs to the beta-catenin family.

It is found in the vacuole membrane. Functions in both vacuole inheritance and protein targeting from the cytoplasm to vacuole. In Aspergillus oryzae (strain ATCC 42149 / RIB 40) (Yellow koji mold), this protein is Vacuolar protein 8 (vac8).